Consider the following 356-residue polypeptide: Tyrosine recombinase XerS (356 aa).

In terms of domain architecture, Core-binding (CB) spans 16 to 121; sequence IMPWYVLDYY…ALSSLYKYLT (106 aa). Residues 169–354 form the Tyr recombinase domain; it reads AFLDYVDKEY…VNDEQKNALD (186 aa). Residues arginine 210, lysine 234, histidine 306, arginine 309, and histidine 332 contribute to the active site. Tyrosine 341 acts as the O-(3'-phospho-DNA)-tyrosine intermediate in catalysis.

This sequence belongs to the 'phage' integrase family. XerS subfamily.

It is found in the cytoplasm. With respect to regulation, ftsK is required for recombination. Its function is as follows. Site-specific tyrosine recombinase, which acts by catalyzing the cutting and rejoining of the recombining DNA molecules. Essential to convert dimers of the bacterial chromosome into monomers to permit their segregation at cell division. The protein is Tyrosine recombinase XerS of Streptococcus equi subsp. zooepidemicus (strain H70).